Consider the following 241-residue polypeptide: MNKLMLQDLHNNLKRRIISHGGKPIEVENGMSERFSHKQDTVIKSWLWDVPGFRRWRVTRMDAGDKLQVLNSVAYPAYTNDKPILGIDILWFGLKRKLVAVLDFQPLVQEERYFCRYYKDLQILKNRFVDFNSQKTMKIYDSNKYFSPWVLLYNGSFDDLQCSLAKILDEFLHAYWQVDNNNSREYIKIIPSKVEQLHINYDIYSAERDPAHGLFKSYFGQTWADQFVREFLFPHSHLTAD.

The protein belongs to the HY2 family.

The enzyme catalyses 15,16-dihydrobiliverdin + oxidized 2[4Fe-4S]-[ferredoxin] = biliverdin IXalpha + reduced 2[4Fe-4S]-[ferredoxin] + 2 H(+). Catalyzes the two-electron reduction of biliverdin IX-alpha at the C15 methine bridge. This is 15,16-dihydrobiliverdin:ferredoxin oxidoreductase (pebA) from Prochlorococcus marinus (strain SARG / CCMP1375 / SS120).